The primary structure comprises 428 residues: ATP-dependent RNA helicase RhlB (428 aa).

The short motif at 9-37 (QKFSDFALHPLVLEALEKKGFQHCTPIQA) is the Q motif element. Residues 40 to 219 (LPLTLSGRDV…FEQMNNAEYV (180 aa)) form the Helicase ATP-binding domain. 53–60 (AQTGTGKT) lines the ATP pocket. A DEAD box motif is present at residues 165 to 168 (DEAD). One can recognise a Helicase C-terminal domain in the interval 245–390 (RLLQTLIEEE…VSKYNSDALL (146 aa)). The interval 392–428 (DLPAPKRLARPRGGNGPRRNSAPRRGGAPRNNRKRSG) is disordered. Positions 408–421 (PRRNSAPRRGGAPR) are enriched in low complexity.

The protein belongs to the DEAD box helicase family. RhlB subfamily. In terms of assembly, component of the RNA degradosome, which is a multiprotein complex involved in RNA processing and mRNA degradation.

It localises to the cytoplasm. The enzyme catalyses ATP + H2O = ADP + phosphate + H(+). Its function is as follows. DEAD-box RNA helicase involved in RNA degradation. Has RNA-dependent ATPase activity and unwinds double-stranded RNA. The chain is ATP-dependent RNA helicase RhlB from Serratia proteamaculans (strain 568).